Here is a 330-residue protein sequence, read N- to C-terminus: Ferredoxin--NADP reductase (330 aa).

Residues threonine 19, aspartate 38, glutamine 46, tyrosine 51, alanine 91, phenylalanine 129, aspartate 286, and serine 327 each contribute to the FAD site.

It belongs to the ferredoxin--NADP reductase type 2 family. Homodimer. It depends on FAD as a cofactor.

It catalyses the reaction 2 reduced [2Fe-2S]-[ferredoxin] + NADP(+) + H(+) = 2 oxidized [2Fe-2S]-[ferredoxin] + NADPH. This is Ferredoxin--NADP reductase from Nocardioides sp. (strain ATCC BAA-499 / JS614).